Reading from the N-terminus, the 701-residue chain is Polyribonucleotide nucleotidyltransferase (701 aa).

Mg(2+) is bound by residues D487 and D493. Positions 554–613 (PTMIAMKIDTDKIRDVIGKGGATIRAICEETKASIDIEDDGSIKIFGESKEAAEAARQRV) constitute a KH domain. The S1 motif domain occupies 623-691 (GKIYVGKVER…NRGRIKLSIK (69 aa)).

It belongs to the polyribonucleotide nucleotidyltransferase family. In terms of assembly, component of the RNA degradosome, which is a multiprotein complex involved in RNA processing and mRNA degradation. Mg(2+) serves as cofactor.

It is found in the cytoplasm. It catalyses the reaction RNA(n+1) + phosphate = RNA(n) + a ribonucleoside 5'-diphosphate. In terms of biological role, involved in mRNA degradation. Catalyzes the phosphorolysis of single-stranded polyribonucleotides processively in the 3'- to 5'-direction. The chain is Polyribonucleotide nucleotidyltransferase from Pseudomonas savastanoi pv. phaseolicola (strain 1448A / Race 6) (Pseudomonas syringae pv. phaseolicola (strain 1448A / Race 6)).